The sequence spans 174 residues: Membrane protein NfeD2 (174 aa).

3 helical membrane passes run 16–36, 47–67, and 72–92; these read LIIAGSLTLLFLFFGDVFSGL, LVLSFFTCFSAGGYIGELVLP, and LIALLSCILSIMLVVLLHIFV.

The protein belongs to the NfeD family.

It is found in the cell membrane. The protein resides in the membrane raft. In terms of biological role, plays a role in assembly of FloT membrane rafts, probably recruited to rafts by FloT. This is Membrane protein NfeD2 from Bacillus subtilis (strain 168).